Reading from the N-terminus, the 174-residue chain is NADH-ubiquinone oxidoreductase chain 6 (174 aa).

The next 6 membrane-spanning stretches (helical) occupy residues 1–21 (MTYALFLLSVILVMGFVGFSS), 24–44 (SPIYGGLVLIISGAVGCAVIL), 47–67 (GGGYMGLVVFLVYLGGMMVVF), 86–106 (AEVLVSVLVGLVMEVGLVLWV), 111–131 (GVVVAVNFNSVGSWMIYEGEG), and 151–171 (WLVVVTGWTLFVGVYVVIEIA).

Belongs to the complex I subunit 6 family. Core subunit of respiratory chain NADH dehydrogenase (Complex I) which is composed of 45 different subunits.

It is found in the mitochondrion inner membrane. It catalyses the reaction a ubiquinone + NADH + 5 H(+)(in) = a ubiquinol + NAD(+) + 4 H(+)(out). Its function is as follows. Core subunit of the mitochondrial membrane respiratory chain NADH dehydrogenase (Complex I) which catalyzes electron transfer from NADH through the respiratory chain, using ubiquinone as an electron acceptor. Essential for the catalytic activity and assembly of complex I. The chain is NADH-ubiquinone oxidoreductase chain 6 (MT-ND6) from Pongo pygmaeus (Bornean orangutan).